The following is a 660-amino-acid chain: Bifunctional polymyxin resistance protein ArnA (660 aa).

Residues 1–304 (MKAIVFAYHD…EMGIVTDVRV (304 aa)) are formyltransferase ArnAFT. Residue H104 is the Proton donor; for formyltransferase activity of the active site. (6R)-10-formyltetrahydrofolate-binding positions include R114 and 136–140 (TAKAD). The dehydrogenase ArnADH stretch occupies residues 314–660 (RRQRVLILGV…RGAVEELGNK (347 aa)). Residues D347 and 368–369 (DV) each bind NAD(+). UDP-alpha-D-glucuronate-binding positions include A393, Y398, and 432 to 433 (TS). The Proton acceptor; for decarboxylase activity role is filled by E434. Residues R460, N492, 526 to 535 (KLVDGGEQKR), and Y613 each bind UDP-alpha-D-glucuronate. The Proton donor; for decarboxylase activity role is filled by R619.

In the N-terminal section; belongs to the Fmt family. UDP-L-Ara4N formyltransferase subfamily. The protein in the C-terminal section; belongs to the NAD(P)-dependent epimerase/dehydratase family. UDP-glucuronic acid decarboxylase subfamily. As to quaternary structure, homohexamer, formed by a dimer of trimers.

The enzyme catalyses UDP-alpha-D-glucuronate + NAD(+) = UDP-beta-L-threo-pentopyranos-4-ulose + CO2 + NADH. It catalyses the reaction UDP-4-amino-4-deoxy-beta-L-arabinose + (6R)-10-formyltetrahydrofolate = UDP-4-deoxy-4-formamido-beta-L-arabinose + (6S)-5,6,7,8-tetrahydrofolate + H(+). It functions in the pathway nucleotide-sugar biosynthesis; UDP-4-deoxy-4-formamido-beta-L-arabinose biosynthesis; UDP-4-deoxy-4-formamido-beta-L-arabinose from UDP-alpha-D-glucuronate: step 1/3. It participates in nucleotide-sugar biosynthesis; UDP-4-deoxy-4-formamido-beta-L-arabinose biosynthesis; UDP-4-deoxy-4-formamido-beta-L-arabinose from UDP-alpha-D-glucuronate: step 3/3. The protein operates within bacterial outer membrane biogenesis; lipopolysaccharide biosynthesis. In terms of biological role, bifunctional enzyme that catalyzes the oxidative decarboxylation of UDP-glucuronic acid (UDP-GlcUA) to UDP-4-keto-arabinose (UDP-Ara4O) and the addition of a formyl group to UDP-4-amino-4-deoxy-L-arabinose (UDP-L-Ara4N) to form UDP-L-4-formamido-arabinose (UDP-L-Ara4FN). The modified arabinose is attached to lipid A and is required for resistance to polymyxin and cationic antimicrobial peptides. The sequence is that of Bifunctional polymyxin resistance protein ArnA from Proteus mirabilis (strain HI4320).